The sequence spans 557 residues: MMFCYQCEQTTRSPAGIGCTSEPGTCGKDEATAGLQDILTHLMKGIAQYARRARAMGVADRRTDDFIFYGLFTTLTNVNFTATRFVHLIQEASKRRERIKLLYEEAAREQGKTPEILSGPALFQPADSLEQLLRQAPSVAINADVEHLGSDVIGARALILYGMKGVAAYAQHARVLGYQSDEVDAQAEEILDYLASNPTDLDEMLEESLEVGRLNLKVMELLDVANTDSFGAQEITSVRISPIQGKAILVSGHDLHDLKQILEQTKDQGINVYTHGEMLPANAYPLLKAYPHLAGNLGGAWQDQQREFADFPGPIVMTSNCIIEPGRSYKNRIFTLGPVGWPGVRHIDNGDFTPVIQAAKALPGFTADAKEQRITIGFGHHTLLGVADKIVDAVKHGDIRHFFLVGGCDGVSPARNYFTEVADNAPADSVVMTLGCGKYRFNKHEFGDIGGIPRLLDIGQCNDAHSAIRVAGALAEAFNCGVNDLPLSIMLSWFEQKATAIHLSLLALGIKGIKLGPTLPAYLTPTLVQKLQSRFDLDLDLIGEAQADLQTALAHTA.

Cys4, Cys7, Cys19, and Cys26 together coordinate [4Fe-4S] cluster. Hybrid [4Fe-2O-2S] cluster contacts are provided by His253, Glu277, Cys321, Cys408, Cys436, Cys461, Glu495, and Lys497. Residue Cys408 is modified to Cysteine persulfide.

This sequence belongs to the HCP family. [4Fe-4S] cluster is required as a cofactor. The cofactor is hybrid [4Fe-2O-2S] cluster.

Its subcellular location is the cytoplasm. The catalysed reaction is A + NH4(+) + H2O = hydroxylamine + AH2 + H(+). Catalyzes the reduction of hydroxylamine to form NH(3) and H(2)O. The chain is Hydroxylamine reductase from Acidithiobacillus ferrooxidans (strain ATCC 53993 / BNL-5-31) (Leptospirillum ferrooxidans (ATCC 53993)).